Reading from the N-terminus, the 366-residue chain is MTPEHLPTEQYDAQLAEKVVRLQSMMAPFSDLVPEVFRSPASHYRMRAEFRLWHDGDDLYHIIFEQQTKSRIRVDSFPAASELINQLMTAMIEGVRHNRVLRHKLFQIDYLTTMSNQAVVSLLYHKKLDDEWRQEAETLRDALRAQNLNVHLIGRATKTKIELDQDYIDERLPVAGKEMIYRQVENSFTQPNAAMNIQMLEWALDATKASKGDLLELYCGNGNFSLALARNFDRVLATEIAKPSVAAAQYNIAANHIDNVQIIRMAAEEFTQAMNGVREFNRLQGIDLKSYQCETIFVDPPRSGLDSETEKMVQAYPRILYISCNPETLCKNLETLSQTHNVSRLALFDQFPYTHHMECGVLLTAR.

S-adenosyl-L-methionine-binding residues include Q190, Y218, N223, E239, and D299. C324 (nucleophile) is an active-site residue. E358 (proton acceptor) is an active-site residue.

The protein belongs to the class I-like SAM-binding methyltransferase superfamily. RNA M5U methyltransferase family. TrmA subfamily.

It carries out the reaction uridine(54) in tRNA + S-adenosyl-L-methionine = 5-methyluridine(54) in tRNA + S-adenosyl-L-homocysteine + H(+). The catalysed reaction is uridine(341) in tmRNA + S-adenosyl-L-methionine = 5-methyluridine(341) in tmRNA + S-adenosyl-L-homocysteine + H(+). Its function is as follows. Dual-specificity methyltransferase that catalyzes the formation of 5-methyluridine at position 54 (m5U54) in all tRNAs, and that of position 341 (m5U341) in tmRNA (transfer-mRNA). In Citrobacter koseri (strain ATCC BAA-895 / CDC 4225-83 / SGSC4696), this protein is tRNA/tmRNA (uracil-C(5))-methyltransferase.